A 381-amino-acid chain; its full sequence is MNEKSCSFHSKEELRDGQGERLSAGYSPSYDKDKSVLAFRGIPISELKNHGILQALTTEAYEWEPRVVSTEVVRAQEEWEAVDTIQPETGSQASSEQPGQLISFSEALQHFQTVDLSPFKKRIQPTIRRTGLAALRHYLFGPPKLHQRLREERDLVLTIAQCGLDSQDPVHGRVLQTIYKKLTGSKFDCALHGNHWEDLGFQGANPATDLRGAGFLALLHLLYLVMDSKTLPMAQEIFRLSRHHIQQFPFCLMSVNITHIAIQALREECLSRECNRQQKVIPVVNSFYAATFLHLAHVWRTQRKTISDSGFVLKELEVLAKKSPRRLLKTLELYLARVSKGQASLLGAQKCYGPEAPPFKDLTFTGESDLQSHSSEGVWLI.

Residues 1 to 31 (MNEKSCSFHSKEELRDGQGERLSAGYSPSYD) form a disordered region. The span at 9–19 (HSKEELRDGQG) shows a compositional bias: basic and acidic residues. The 155-residue stretch at 170 to 324 (VHGRVLQTIY…ELEVLAKKSP (155 aa)) folds into the ELMO domain.

As to expression, both isoform 1 and isoform 6 are widely expressed.

It localises to the cell projection. Its subcellular location is the stereocilium. The protein resides in the kinocilium. The protein localises to the cytoplasm. It is found in the cytoskeleton. In terms of biological role, acts as a GTPase-activating protein (GAP) for ARL2 with low specific activity. The protein is ELMO domain-containing protein 3 (ELMOD3) of Homo sapiens (Human).